A 382-amino-acid polypeptide reads, in one-letter code: MAP kinase-activated protein kinase 3 (382 aa).

Met1 is subject to N-acetylmethionine. Residues Met1–Pro34 are disordered. Over residues Gly20 to Gly29 the composition is skewed to gly residues. A Protein kinase domain is found at Gln44–Ile304. ATP-binding positions include Leu50 to Val58 and Lys73. Residue Asp166 is the Proton acceptor of the active site. Thr201 carries the phosphothreonine; by MAPK14 modification. Ser251 carries the post-translational modification Phosphoserine; by MAPK14. Ser307 bears the Phosphoserine; by autocatalysis mark. Positions Ser307–Arg343 are autoinhibitory helix. Thr313 is modified (phosphothreonine; by MAPK14). Positions Met335–Val344 match the Nuclear export signal (NES) motif. The p38 MAPK-binding site stretch occupies residues Asp345–Gln369. Short sequence motifs (bipartite nuclear localization signal) lie at residues Lys350 to Asp353 and Lys364 to Lys368. The tract at residues Ser357 to Gln382 is disordered. The span at Ala370–Gln382 shows a compositional bias: polar residues.

The protein belongs to the protein kinase superfamily. CAMK Ser/Thr protein kinase family. Heterodimer with p38-alpha/MAPK14. The heterodimer with p38-alpha/MAPK14 forms a stable complex: molecules are positioned 'face to face' so that the ATP-binding sites of both kinases are at the heterodimer interface. Interacts with TCF3 and with polycomb proteins, such as PCH2 and BMI1/PCGF4. Phosphorylated and activated by MAPK1/ERK2 and MAPK3/ERK1. Phosphorylated and activated by MAP kinase p38-alpha/MAPK14 at Thr-201, Ser-251 and Thr-313. In terms of tissue distribution, widely expressed, with a higher expression level observed in heart and skeletal muscle. No expression in brain. Expressed in the retinal pigment epithelium.

It is found in the nucleus. It localises to the cytoplasm. It catalyses the reaction L-seryl-[protein] + ATP = O-phospho-L-seryl-[protein] + ADP + H(+). The enzyme catalyses L-threonyl-[protein] + ATP = O-phospho-L-threonyl-[protein] + ADP + H(+). Its activity is regulated as follows. Activated following phosphorylation by p38-alpha/MAPK14 following various stresses. Inhibited by ligand 5B (2'-[2-(1,3-benzodioxol-5-yl)pyrimidin-4-yl]-5',6'-dihydrospiro[piperidine-4,7'-pyrrolo[3,2-c]pyridin]- 4'(1'h)-one) and ligand P4O (2-[2-(2-fluorophenyl)pyridin-4-yl]-1,5,6,7-tetrahydro- 4h-pyrrolo[3,2-c]pyridin-4-one), 2 ATP-competitive inhibitors. In terms of biological role, stress-activated serine/threonine-protein kinase involved in cytokines production, endocytosis, cell migration, chromatin remodeling and transcriptional regulation. Following stress, it is phosphorylated and activated by MAP kinase p38-alpha/MAPK14, leading to phosphorylation of substrates. Phosphorylates serine in the peptide sequence, Hyd-X-R-X(2)-S, where Hyd is a large hydrophobic residue. MAPKAPK2 and MAPKAPK3, share the same function and substrate specificity, but MAPKAPK3 kinase activity and level in protein expression are lower compared to MAPKAPK2. Phosphorylates HSP27/HSPB1, KRT18, KRT20, RCSD1, RPS6KA3, TAB3 and TTP/ZFP36. Mediates phosphorylation of HSP27/HSPB1 in response to stress, leading to dissociate HSP27/HSPB1 from large small heat-shock protein (sHsps) oligomers and impair their chaperone activities and ability to protect against oxidative stress effectively. Involved in inflammatory response by regulating tumor necrosis factor (TNF) and IL6 production post-transcriptionally: acts by phosphorylating AU-rich elements (AREs)-binding proteins, such as TTP/ZFP36, leading to regulate the stability and translation of TNF and IL6 mRNAs. Phosphorylation of TTP/ZFP36, a major post-transcriptional regulator of TNF, promotes its binding to 14-3-3 proteins and reduces its ARE mRNA affinity leading to inhibition of dependent degradation of ARE-containing transcript. Involved in toll-like receptor signaling pathway (TLR) in dendritic cells: required for acute TLR-induced macropinocytosis by phosphorylating and activating RPS6KA3. Also acts as a modulator of Polycomb-mediated repression. This is MAP kinase-activated protein kinase 3 (MAPKAPK3) from Homo sapiens (Human).